The sequence spans 570 residues: Conserved oligomeric Golgi complex subunit 8 (570 aa).

The protein belongs to the COG8 family. Component of the conserved oligomeric Golgi complex which is composed of eight different subunits and is required for normal Golgi morphology and localization.

It localises to the golgi apparatus membrane. Functionally, required for normal Golgi function. This is Conserved oligomeric Golgi complex subunit 8 from Drosophila melanogaster (Fruit fly).